Here is a 245-residue protein sequence, read N- to C-terminus: Ribonuclease P protein component 3 (245 aa).

This sequence belongs to the eukaryotic/archaeal RNase P protein component 3 family. As to quaternary structure, consists of a catalytic RNA component and at least 4-5 protein subunits.

The protein localises to the cytoplasm. The enzyme catalyses Endonucleolytic cleavage of RNA, removing 5'-extranucleotides from tRNA precursor.. Part of ribonuclease P, a protein complex that generates mature tRNA molecules by cleaving their 5'-ends. This chain is Ribonuclease P protein component 3, found in Methanothermobacter thermautotrophicus (strain ATCC 29096 / DSM 1053 / JCM 10044 / NBRC 100330 / Delta H) (Methanobacterium thermoautotrophicum).